Here is a 75-residue protein sequence, read N- to C-terminus: UPF0512 protein C (75 aa).

It belongs to the UPF0512 family.

The chain is UPF0512 protein C from Dictyostelium discoideum (Social amoeba).